Reading from the N-terminus, the 320-residue chain is METELDDERDGEVVVVGGGVIGLTTAVVLAERGRRVRLWTREPAERTTSVVAGGLWWPYRIEPVALAQAWALRSLDVYEELAARPGQTGVRMLEGVLGETGLDEVDGWAAARLPGLRAASAAEYAGTGLWARLPLIDMSTHLPWLRERLLAAGGTVEDRAVTDLAEADAPVVVNCTGLGARELVPDPAVRPVRGQLVVVENPGIHNWLVAADADSGETTYFLPQPGRLLLGGTAEEDAWSTEPDPEVAAAIVRRCAALRPEIAGARVLAHLVGLRPARDAVRLERGTLPDGRRLVHNYGHGGAGVTVAWGCAQEAARLAS.

Residues glycine 18, glycine 19, valine 20, isoleucine 21, threonine 47, threonine 48, serine 49, glycine 53, glycine 54, leucine 55, valine 161, and threonine 176 each contribute to the FAD site. D-proline is bound by residues tyrosine 220 and arginine 275. 2 residues coordinate D-serine: tyrosine 220 and arginine 275. Residues arginine 275, glycine 301, glycine 302, glycine 304, and threonine 306 each contribute to the FAD site. Glycine 302 is a D-proline binding site. Glycine 302 provides a ligand contact to D-serine.

It belongs to the DAMOX/DASOX family. The cofactor is FAD.

The protein localises to the cytoplasm. Its subcellular location is the secreted. The protein resides in the cell wall. It catalyses the reaction a D-alpha-amino acid + O2 + H2O = a 2-oxocarboxylate + H2O2 + NH4(+). The enzyme catalyses D-leucine + O2 + H2O = 4-methyl-2-oxopentanoate + H2O2 + NH4(+). The catalysed reaction is D-valine + O2 + H2O = 3-methyl-2-oxobutanoate + H2O2 + NH4(+). It carries out the reaction D-isoleucine + O2 + H2O = (R)-3-methyl-2-oxopentanoate + H2O2 + NH4(+). It catalyses the reaction D-methionine + O2 + H2O = 4-methylsulfanyl-2-oxobutanoate + H2O2 + NH4(+). Catalyzes the oxidative deamination of D-amino acids with broad substrate specificity. The protein is D-amino-acid oxidase of Streptomyces coelicolor (strain ATCC BAA-471 / A3(2) / M145).